Reading from the N-terminus, the 303-residue chain is Phosphoribosylaminoimidazole-succinocarboxamide synthase (303 aa).

This sequence belongs to the SAICAR synthetase family.

The enzyme catalyses 5-amino-1-(5-phospho-D-ribosyl)imidazole-4-carboxylate + L-aspartate + ATP = (2S)-2-[5-amino-1-(5-phospho-beta-D-ribosyl)imidazole-4-carboxamido]succinate + ADP + phosphate + 2 H(+). The protein operates within purine metabolism; IMP biosynthesis via de novo pathway; 5-amino-1-(5-phospho-D-ribosyl)imidazole-4-carboxamide from 5-amino-1-(5-phospho-D-ribosyl)imidazole-4-carboxylate: step 1/2. This is Phosphoribosylaminoimidazole-succinocarboxamide synthase (ADE1) from Pichia angusta (Yeast).